The following is a 700-amino-acid chain: Polyribonucleotide nucleotidyltransferase (700 aa).

Residues aspartate 485 and aspartate 491 each coordinate Mg(2+). In terms of domain architecture, KH spans 552–611 (PRITTLKINPEKIRDVIGKGGATIRALTEETGTTIELEDDGTVKIASANGDATKEAIRRI). Residues 621-689 (GTVYNGKVVR…RQGRVRLSMK (69 aa)) enclose the S1 motif domain.

It belongs to the polyribonucleotide nucleotidyltransferase family. As to quaternary structure, component of the RNA degradosome, which is a multiprotein complex involved in RNA processing and mRNA degradation. The cofactor is Mg(2+).

It is found in the cytoplasm. The catalysed reaction is RNA(n+1) + phosphate = RNA(n) + a ribonucleoside 5'-diphosphate. In terms of biological role, involved in mRNA degradation. Catalyzes the phosphorolysis of single-stranded polyribonucleotides processively in the 3'- to 5'-direction. This chain is Polyribonucleotide nucleotidyltransferase, found in Shewanella loihica (strain ATCC BAA-1088 / PV-4).